The following is a 502-amino-acid chain: Nostrin (502 aa).

One can recognise an F-BAR domain in the interval 1-260 (MRDPLTDCSY…AISKVDVEKD (260 aa)). Phosphoserine is present on Ser114. 2 coiled-coil regions span residues 160-230 (SMTQ…LNQY) and 305-335 (KLWR…SSAS). The REM-1 domain maps to 292–372 (PMDKERRKSL…SYKLSTVLAD (81 aa)). A disordered region spans residues 413 to 437 (KAESKAPAGEQNNPSSSRPGSSVSQ). A compositionally biased stretch (low complexity) spans 423–437 (QNNPSSSRPGSSVSQ). The SH3 domain maps to 438 to 497 (GNNQLCKALYTFQARQDDELNLEKGDIVTIHEKKEEGWWFGSLNGKKGHFPAAYVEELPP). Position 479 is a phosphoserine (Ser479).

Homotrimer. Interacts with DAB2. Interacts with NOS3, WASL and CAV1. Interacts (via SH3 domain) with DNM2; this interaction allows the recruitment of NOS3 to dynamin-positive structures. In terms of tissue distribution, over-expressed in brain microcapillaries from spontaneously hypertensive rats.

It localises to the cell membrane. Its subcellular location is the cytoplasmic vesicle. The protein resides in the cytoplasm. It is found in the cytoskeleton. The protein localises to the nucleus. Functionally, multivalent adapter protein which may decrease NOS3 activity by inducing its translocation away from the plasma membrane. This Rattus norvegicus (Rat) protein is Nostrin.